Consider the following 401-residue polypeptide: Glutamyl-tRNA reductase (401 aa).

Residues 45–48 (TCNR), Ser-101, 106–108 (EDQ), and Gln-112 contribute to the substrate site. Cys-46 serves as the catalytic Nucleophile. 177 to 182 (GYGDVG) provides a ligand contact to NADP(+).

The protein belongs to the glutamyl-tRNA reductase family. In terms of assembly, homodimer.

It catalyses the reaction (S)-4-amino-5-oxopentanoate + tRNA(Glu) + NADP(+) = L-glutamyl-tRNA(Glu) + NADPH + H(+). The protein operates within porphyrin-containing compound metabolism; protoporphyrin-IX biosynthesis; 5-aminolevulinate from L-glutamyl-tRNA(Glu): step 1/2. In terms of biological role, catalyzes the NADPH-dependent reduction of glutamyl-tRNA(Glu) to glutamate 1-semialdehyde (GSA). The sequence is that of Glutamyl-tRNA reductase from Clostridium botulinum (strain Eklund 17B / Type B).